A 384-amino-acid polypeptide reads, in one-letter code: Spermidine/putrescine import ATP-binding protein PotA (384 aa).

The ABC transporter domain occupies 6 to 238 (ITFNNVSKTF…PINHFVANFI (233 aa)). Residue 40–47 (GASGSGKS) coordinates ATP.

It belongs to the ABC transporter superfamily. Spermidine/putrescine importer (TC 3.A.1.11.1) family. The complex is composed of two ATP-binding proteins (PotA), two transmembrane proteins (PotB and PotC) and a solute-binding protein (PotD).

Its subcellular location is the cell membrane. It catalyses the reaction ATP + H2O + polyamine-[polyamine-binding protein]Side 1 = ADP + phosphate + polyamineSide 2 + [polyamine-binding protein]Side 1.. Part of the ABC transporter complex PotABCD involved in spermidine/putrescine import. Responsible for energy coupling to the transport system. The sequence is that of Spermidine/putrescine import ATP-binding protein PotA from Streptococcus pyogenes serotype M12 (strain MGAS2096).